Consider the following 3130-residue polypeptide: DNA polymerase zeta catalytic subunit (3130 aa).

Disordered regions lie at residues 263–295 (AIWE…VPAT), 425–457 (GYRG…NEPQ), 487–510 (LCRN…MEWS), 524–548 (LDGT…SSVI), 697–728 (PNEN…EKGN), and 817–871 (VTYK…EKDN). Residues 286–295 (SQDHRFVPAT) show a composition bias toward basic and acidic residues. The segment covering 497–509 (EDDDSSSGEEMEW) has biased composition (acidic residues). 2 stretches are compositionally biased toward polar residues: residues 533-548 (DNPL…SSVI) and 699-728 (ENTL…EKGN). Basic residues predominate over residues 828–838 (SRLKLNKRKLA). Residues 842–854 (ETSTKSSETGSTK) are compositionally biased toward low complexity. The span at 855 to 866 (DNFIQNNPCNSN) shows a compositional bias: polar residues. Phosphoserine is present on serine 1030. Disordered regions lie at residues 1035–1095 (YPIY…YNAE), 1162–1231 (SRIG…DEKI), and 1537–1600 (RQQK…KLLK). Phosphothreonine is present on threonine 1041. 2 stretches are compositionally biased toward basic residues: residues 1043–1061 (KKSH…KTGK) and 1166–1179 (KTSR…KSKA). Positions 1213-1231 (KTNEKGTSRKHTTLKDEKI) are enriched in basic and acidic residues. Positions 1540-1565 (KAQNANTTQDPLSNKHQPNKNISGSL) are enriched in polar residues. Over residues 1570-1589 (ANKRTRSVTSPRKPRTPRST) the composition is skewed to basic residues. Basic and acidic residues predominate over residues 1590–1600 (KQKEKIPKLLK). Serine 1724 carries the phosphoserine modification. 5 disordered regions span residues 1845–1882 (NDML…KPLM), 1962–1984 (NPRP…SNSP), 2017–2050 (ERSK…PVVP), 2080–2150 (PTTG…SPVE), and 2216–2236 (APGL…NKKG). Positions 1847–1898 (MLTPTPDSSPRSTSSPSQSKNGSFTPRTANILKPLMSPPSREEIMATLLDHD) are mediates interaction with MAD2L2. Over residues 1849–1865 (TPTPDSSPRSTSSPSQS) the composition is skewed to low complexity. Serine 1967 carries the phosphoserine modification. Polar residues predominate over residues 2080-2092 (PTTGCSQTASESQ). Over residues 2113 to 2122 (YYISYSSPDS) the composition is skewed to low complexity. A compositionally biased stretch (polar residues) spans 2221–2236 (PLSTEPKTQKLSNKKG). Residues cysteine 3042, cysteine 3045, cysteine 3054, and cysteine 3057 each coordinate Zn(2+). The CysA-type zinc finger occupies 3042-3057 (CPVCDDLTQHGICSKC). [4Fe-4S] cluster is bound by residues cysteine 3086, cysteine 3089, cysteine 3099, and cysteine 3104. The CysB motif motif lies at 3086–3104 (CKNCTGCFDRHIPCVSLNC).

This sequence belongs to the DNA polymerase type-B family. As to quaternary structure, heterodimer with MAD2L2. This dimer forms the minimal DNA polymerase zeta complex (Pol-zeta2), with REV3L bearing DNA polymerase catalytic activity, although its activity is very low in this context. Component of the tetrameric Pol-zeta complex (Pol-zeta4), which consists of REV3L, MAD2L2, POLD2 and POLD3; Pol-zeta4 is the fully active form of DNA polymerase zeta. [4Fe-4S] cluster is required as a cofactor. As to expression, ubiquitously expressed.

The protein localises to the nucleus. The enzyme catalyses DNA(n) + a 2'-deoxyribonucleoside 5'-triphosphate = DNA(n+1) + diphosphate. Its function is as follows. Catalytic subunit of the DNA polymerase zeta complex, an error-prone polymerase specialized in translesion DNA synthesis (TLS). Lacks an intrinsic 3'-5' exonuclease activity and thus has no proofreading function. The protein is DNA polymerase zeta catalytic subunit (REV3L) of Homo sapiens (Human).